The sequence spans 551 residues: Probable 4-coumarate--CoA ligase 2 (551 aa).

The ATP site is built by S205, S206, G207, T208, T209, and K213. Positions 253 and 257 each coordinate (E)-4-coumaroyl-AMP. Residue K274 participates in CoA binding. The SBD1 stretch occupies residues 276–346; sequence EFVRFLDLIQ…RFKGKLIIKQ (71 aa). (E)-4-coumaroyl-AMP is bound by residues A323, Q346, G347, and T351. The ATP site is built by Q346, G347, T351, D430, and R445. An SBD2 region spans residues 347 to 409; sequence GYGATELSPA…IKGPNVMLGY (63 aa). Positions 447 and 451 each coordinate (E)-4-coumaroyl-AMP. Residues K453 and G454 each coordinate CoA. Position 537 (K537) interacts with ATP.

Belongs to the ATP-dependent AMP-binding enzyme family. It depends on Mg(2+) as a cofactor.

The catalysed reaction is (E)-4-coumarate + ATP + CoA = (E)-4-coumaroyl-CoA + AMP + diphosphate. The enzyme catalyses (E)-4-coumarate + ATP + H(+) = (E)-4-coumaroyl-AMP + diphosphate. It carries out the reaction (E)-4-coumaroyl-AMP + CoA = (E)-4-coumaroyl-CoA + AMP + H(+). Its pathway is phytoalexin biosynthesis; 3,4',5-trihydroxystilbene biosynthesis; 3,4',5-trihydroxystilbene from trans-4-coumarate: step 1/2. In terms of biological role, carboxylate--CoA ligase that may use 4-coumarate as substrate. Follows a two-step reaction mechanism, wherein the carboxylate substrate first undergoes adenylation by ATP, followed by a thioesterification in the presence of CoA to yield the final CoA thioester. The polypeptide is Probable 4-coumarate--CoA ligase 2 (4cl2) (Dictyostelium discoideum (Social amoeba)).